Consider the following 229-residue polypeptide: MAQNGTGGGSRRPRRGRRNNNNNNSTARDKALLALTQQVNRLANIASSSAPSLQHPTFIASKKCRAGYTYTSLDVRPTRTEKDKSFGQRLIIPVPVSEYPKKKVSCVQVRLNPSPKFNSTIWVSLRRLDETTLLTSENVFKLFTDGLAAVLIYQHVPTGIQPNNKITFDMSNVGAEIGDMGKYALIVYSKDDVLEADEMVIHIDIEHQRIPSLQRSRCDSTRMHDVRRR.

An N-acetylmethionine; by host modification is found at Met1. Positions 1-10 (MAQNGTGGGS) are enriched in gly residues. Positions 1 to 28 (MAQNGTGGGSRRPRRGRRNNNNNNSTAR) are disordered. A disulfide bond links Cys64 and Cys106.

Belongs to the cucumovirus capsid protein family.

It localises to the virion. In terms of biological role, capsid protein. Probably binds RNA and plays a role in packaging. The polypeptide is Capsid protein (Canna (Florist's daisy)).